Here is a 372-residue protein sequence, read N- to C-terminus: Anhydro-N-acetylmuramic acid kinase (372 aa).

14 to 21 is an ATP binding site; it reads GTSLDGVD.

The protein belongs to the anhydro-N-acetylmuramic acid kinase family.

It carries out the reaction 1,6-anhydro-N-acetyl-beta-muramate + ATP + H2O = N-acetyl-D-muramate 6-phosphate + ADP + H(+). It functions in the pathway amino-sugar metabolism; 1,6-anhydro-N-acetylmuramate degradation. Its pathway is cell wall biogenesis; peptidoglycan recycling. Catalyzes the specific phosphorylation of 1,6-anhydro-N-acetylmuramic acid (anhMurNAc) with the simultaneous cleavage of the 1,6-anhydro ring, generating MurNAc-6-P. Is required for the utilization of anhMurNAc either imported from the medium or derived from its own cell wall murein, and thus plays a role in cell wall recycling. This is Anhydro-N-acetylmuramic acid kinase from Photorhabdus laumondii subsp. laumondii (strain DSM 15139 / CIP 105565 / TT01) (Photorhabdus luminescens subsp. laumondii).